A 154-amino-acid polypeptide reads, in one-letter code: SsrA-binding protein (154 aa).

The protein belongs to the SmpB family.

Its subcellular location is the cytoplasm. Functionally, required for rescue of stalled ribosomes mediated by trans-translation. Binds to transfer-messenger RNA (tmRNA), required for stable association of tmRNA with ribosomes. tmRNA and SmpB together mimic tRNA shape, replacing the anticodon stem-loop with SmpB. tmRNA is encoded by the ssrA gene; the 2 termini fold to resemble tRNA(Ala) and it encodes a 'tag peptide', a short internal open reading frame. During trans-translation Ala-aminoacylated tmRNA acts like a tRNA, entering the A-site of stalled ribosomes, displacing the stalled mRNA. The ribosome then switches to translate the ORF on the tmRNA; the nascent peptide is terminated with the 'tag peptide' encoded by the tmRNA and targeted for degradation. The ribosome is freed to recommence translation, which seems to be the essential function of trans-translation. The polypeptide is SsrA-binding protein (Methylobacillus flagellatus (strain ATCC 51484 / DSM 6875 / VKM B-1610 / KT)).